Reading from the N-terminus, the 355-residue chain is UDP-N-acetylglucosamine--N-acetylmuramyl-(pentapeptide) pyrophosphoryl-undecaprenol N-acetylglucosamine transferase (355 aa).

Residues 14–16, N123, R164, S190, and Q284 contribute to the UDP-N-acetyl-alpha-D-glucosamine site; that span reads TGG.

Belongs to the glycosyltransferase 28 family. MurG subfamily.

It is found in the cell inner membrane. It carries out the reaction di-trans,octa-cis-undecaprenyl diphospho-N-acetyl-alpha-D-muramoyl-L-alanyl-D-glutamyl-meso-2,6-diaminopimeloyl-D-alanyl-D-alanine + UDP-N-acetyl-alpha-D-glucosamine = di-trans,octa-cis-undecaprenyl diphospho-[N-acetyl-alpha-D-glucosaminyl-(1-&gt;4)]-N-acetyl-alpha-D-muramoyl-L-alanyl-D-glutamyl-meso-2,6-diaminopimeloyl-D-alanyl-D-alanine + UDP + H(+). Its pathway is cell wall biogenesis; peptidoglycan biosynthesis. Its function is as follows. Cell wall formation. Catalyzes the transfer of a GlcNAc subunit on undecaprenyl-pyrophosphoryl-MurNAc-pentapeptide (lipid intermediate I) to form undecaprenyl-pyrophosphoryl-MurNAc-(pentapeptide)GlcNAc (lipid intermediate II). This Synechocystis sp. (strain ATCC 27184 / PCC 6803 / Kazusa) protein is UDP-N-acetylglucosamine--N-acetylmuramyl-(pentapeptide) pyrophosphoryl-undecaprenol N-acetylglucosamine transferase.